Consider the following 475-residue polypeptide: Methyltransferase-like protein 25B (475 aa).

A coiled-coil region spans residues 186–210 (QRLVERAQRLDQELLQTLEKEEKRN). The chain crosses the membrane as a helical span at residues 406–426 (VVAFFSLALLLAPLVETLILL).

This sequence belongs to the METTL25 family.

Its subcellular location is the membrane. The sequence is that of Methyltransferase-like protein 25B from Bos taurus (Bovine).